Here is a 393-residue protein sequence, read N- to C-terminus: Putative N(4)-(beta-N-acetylglucosaminyl)-L-asparaginase GM21137 (393 aa).

A signal peptide spans 1–23 (MRTHLRASLWVLCLASTAFSILA). Disulfide bonds link Cys-97-Cys-102 and Cys-196-Cys-212. Catalysis depends on Thr-243, which acts as the Nucleophile. Substrate is bound by residues 271–274 (RVGD) and 294–297 (TGDG). An intrachain disulfide couples Cys-354 to Cys-381.

Belongs to the Ntn-hydrolase family. In terms of assembly, heterotetramer of two alpha and two beta chains arranged as a dimer of alpha/beta heterodimers. In terms of processing, cleaved into an alpha and beta chain by autocatalysis; this activates the enzyme. The N-terminal residue of the beta subunit is responsible for the nucleophile hydrolase activity.

The enzyme catalyses N(4)-(beta-N-acetyl-D-glucosaminyl)-L-asparagine + H2O = N-acetyl-beta-D-glucosaminylamine + L-aspartate + H(+). Cleaves the GlcNAc-Asn bond which joins oligosaccharides to the peptide of asparagine-linked glycoproteins. The polypeptide is Putative N(4)-(beta-N-acetylglucosaminyl)-L-asparaginase GM21137 (Drosophila sechellia (Fruit fly)).